The sequence spans 626 residues: Dynein, cytoplasmic 1, intermediate chain 2a (626 aa).

The span at Q20–A43 shows a compositional bias: basic and acidic residues. Disordered regions lie at residues Q20–H108 and K142–T197. Positions T82–D99 are enriched in polar residues. The segment covering K160–T169 has biased composition (acidic residues). Residues E177 to T197 show a composition bias toward basic and acidic residues. WD repeat units follow at residues S265 to E314, H318 to V358, A367 to D408, S417 to S457, G462 to S507, D510 to T550, and D556 to R595.

It belongs to the dynein intermediate chain family. Homodimer. The cytoplasmic dynein 1 complex consists of two catalytic heavy chains (HCs) and a number of non-catalytic subunits presented by intermediate chains (ICs), light intermediate chains (LICs) and light chains (LCs); the composition seems to vary in respect to the IC, LIC and LC composition. The heavy chain homodimer serves as a scaffold for the probable homodimeric assembly of the respective non-catalytic subunits. The ICs and LICs bind directly to the HC dimer and the LCs assemble on the IC dimer.

The protein localises to the cytoplasm. Its subcellular location is the cytoskeleton. Acts as one of several non-catalytic accessory components of the cytoplasmic dynein 1 complex that are thought to be involved in linking dynein to cargos and to adapter proteins that regulate dynein function. Cytoplasmic dynein 1 acts as a motor for the intracellular retrograde motility of vesicles and organelles along microtubules. Plays a role in the development of anterior brain and cartilaginous structures. This Danio rerio (Zebrafish) protein is Dynein, cytoplasmic 1, intermediate chain 2a (dync1i2a).